A 90-amino-acid chain; its full sequence is Albumin-1 (90 aa).

A1 is a signal peptide. 3 disulfide bridges follow: C4-C21, C8-C23, and C16-C34. Residues 40–47 (LSSVAKMI) constitute a propeptide that is removed on maturation.

In terms of processing, the C-terminal glycine may be removed from A1b.

In terms of biological role, A1b binds to basic 7S globulin (BG) and stimulates its phosphorylation activity. This chain is Albumin-1 (LEG), found in Phaseolus angularis (Azuki bean).